The sequence spans 186 residues: ATP synthase subunit delta, chloroplastic (186 aa).

This sequence belongs to the ATPase delta chain family. As to quaternary structure, F-type ATPases have 2 components, F(1) - the catalytic core - and F(0) - the membrane proton channel. F(1) has five subunits: alpha(3), beta(3), gamma(1), delta(1), epsilon(1). CF(0) has four main subunits: a(1), b(1), b'(1) and c(10-14). The alpha and beta chains form an alternating ring which encloses part of the gamma chain. F(1) is attached to F(0) by a central stalk formed by the gamma and epsilon chains, while a peripheral stalk is formed by the delta, b and b' chains.

The protein resides in the plastid. Its subcellular location is the chloroplast thylakoid membrane. In terms of biological role, f(1)F(0) ATP synthase produces ATP from ADP in the presence of a proton or sodium gradient. F-type ATPases consist of two structural domains, F(1) containing the extramembraneous catalytic core and F(0) containing the membrane proton channel, linked together by a central stalk and a peripheral stalk. During catalysis, ATP synthesis in the catalytic domain of F(1) is coupled via a rotary mechanism of the central stalk subunits to proton translocation. Its function is as follows. This protein is part of the stalk that links CF(0) to CF(1). It either transmits conformational changes from CF(0) to CF(1) or is implicated in proton conduction. This chain is ATP synthase subunit delta, chloroplastic, found in Porphyra purpurea (Red seaweed).